The following is a 64-amino-acid chain: Alpha-like toxin BmK M2 (64 aa).

The LCN-type CS-alpha/beta domain occupies 2-64 (RDAYIAKPHN…VPIRVPGKCH (63 aa)). 4 cysteine pairs are disulfide-bonded: Cys-12–Cys-63, Cys-16–Cys-36, Cys-22–Cys-46, and Cys-26–Cys-48.

The protein belongs to the long (4 C-C) scorpion toxin superfamily. Sodium channel inhibitor family. Alpha subfamily. In terms of tissue distribution, expressed by the venom gland.

The protein resides in the secreted. Alpha toxins bind voltage-independently at site-3 of sodium channels (Nav) and inhibit the inactivation of the activated channels, thereby blocking neuronal transmission. This toxin is active against both mammals and insects, and is classified as an alpha-like toxin. In Olivierus martensii (Manchurian scorpion), this protein is Alpha-like toxin BmK M2.